A 335-amino-acid polypeptide reads, in one-letter code: Lipoyl synthase (335 aa).

Positions 55, 60, 66, 81, 85, 88, and 292 each coordinate [4Fe-4S] cluster. Residues Trp-67–Gln-281 form the Radical SAM core domain.

It belongs to the radical SAM superfamily. Lipoyl synthase family. Requires [4Fe-4S] cluster as cofactor.

The protein resides in the cytoplasm. It catalyses the reaction [[Fe-S] cluster scaffold protein carrying a second [4Fe-4S](2+) cluster] + N(6)-octanoyl-L-lysyl-[protein] + 2 oxidized [2Fe-2S]-[ferredoxin] + 2 S-adenosyl-L-methionine + 4 H(+) = [[Fe-S] cluster scaffold protein] + N(6)-[(R)-dihydrolipoyl]-L-lysyl-[protein] + 4 Fe(3+) + 2 hydrogen sulfide + 2 5'-deoxyadenosine + 2 L-methionine + 2 reduced [2Fe-2S]-[ferredoxin]. Its pathway is protein modification; protein lipoylation via endogenous pathway; protein N(6)-(lipoyl)lysine from octanoyl-[acyl-carrier-protein]: step 2/2. In terms of biological role, catalyzes the radical-mediated insertion of two sulfur atoms into the C-6 and C-8 positions of the octanoyl moiety bound to the lipoyl domains of lipoate-dependent enzymes, thereby converting the octanoylated domains into lipoylated derivatives. The protein is Lipoyl synthase of Micrococcus luteus (strain ATCC 4698 / DSM 20030 / JCM 1464 / CCM 169 / CCUG 5858 / IAM 1056 / NBRC 3333 / NCIMB 9278 / NCTC 2665 / VKM Ac-2230) (Micrococcus lysodeikticus).